Reading from the N-terminus, the 104-residue chain is Class I hydrophobin 4 (104 aa).

Positions 1–16 (MFASTVFVSLLAVAAA) are cleaved as a signal peptide. 4 disulfides stabilise this stretch: Cys-26–Cys-85, Cys-34–Cys-79, Cys-35–Cys-61, and Cys-86–Cys-99.

Belongs to the fungal hydrophobin family. As to quaternary structure, self-assembles to form functional amyloid fibrils called rodlets. Self-assembly into fibrillar rodlets occurs spontaneously at hydrophobic:hydrophilic interfaces and the rodlets further associate laterally to form amphipathic monolayers.

Its subcellular location is the secreted. The protein localises to the cell wall. Functionally, aerial growth, conidiation, and dispersal of filamentous fungi in the environment rely upon a capability of their secreting small amphipathic proteins called hydrophobins (HPBs) with low sequence identity. Class I can self-assemble into an outermost layer of rodlet bundles on aerial cell surfaces, conferring cellular hydrophobicity that supports fungal growth, development and dispersal; whereas Class II form highly ordered films at water-air interfaces through intermolecular interactions but contribute nothing to the rodlet structure. HYD4 is a class I hydrophobin that negatively regulates aerial mycelial growth, conidiation, carotenoid and adenosine synthesis, resistance to oxidant stress, and fruiting body development. Seems not to be involved in the mycelial growth rate, the hydrophobicity of the mycelia and conidia, nor the conidial virulence on silkworm pupae. In Cordyceps militaris (Caterpillar fungus), this protein is Class I hydrophobin 4.